The sequence spans 399 residues: Transmembrane protein 237 homolog (399 aa).

Residues 1–11 (MPPTSRPVPPP) show a composition bias toward pro residues. A disordered region spans residues 1–158 (MPPTSRPVPP…PHDKRNMPAK (158 aa)). Basic and acidic residues-rich tracts occupy residues 36-45 (NQQRRFRENN), 111-135 (EAAKHSREDPSGETVEVRRPNDPRR), and 144-158 (KSFRDPHDKRNMPAK). 4 helical membrane passes run 222–242 (IANIIQGFLAGISVMLAIFSF), 256–276 (MSLPIHAGFMVAFTVGLVSAI), 301–321 (GLITFIVWFVGLVSTLLCIQL), and 343–363 (VFNVLRALTSGLGFLLLAFKP).

This sequence belongs to the TMEM237 family.

The protein resides in the membrane. It is found in the cell projection. The protein localises to the cilium. In terms of biological role, component of the transition zone in primary cilia. Required for ciliogenesis. The chain is Transmembrane protein 237 homolog from Caenorhabditis elegans.